We begin with the raw amino-acid sequence, 405 residues long: Sesquiterpene synthase 16 (405 aa).

Residues Asp-155, Asp-159, and Glu-309 each contribute to the Mg(2+) site. A DDXXD motif motif is present at residues 155–159 (DDTYD).

It belongs to the terpene synthase family. Tpsa subfamily. The cofactor is Mg(2+). Mn(2+) is required as a cofactor.

It functions in the pathway secondary metabolite biosynthesis; terpenoid biosynthesis. Functionally, sesquiterpene synthase involved in the biosynthesis of volatile compounds. No activity detected with geranyl diphosphate (GPP) and farnesyl diphosphate (FPP) as substrates. The sequence is that of Sesquiterpene synthase 16 from Solanum habrochaites (Wild tomato).